The primary structure comprises 91 residues: uncharacterized protein (91 aa).

The N-terminal stretch at 1–25 (MLLQRIGIEHLRIWILLLLISLVPA) is a signal peptide.

This is an uncharacterized protein from Caenorhabditis elegans.